A 676-amino-acid polypeptide reads, in one-letter code: Hypermethylated in cancer 1 protein (676 aa).

Residues 1–27 form a disordered region; the sequence is APGARPAASRERGHKSREERCGERGAA. Over residues 8–23 the composition is skewed to basic and acidic residues; that stretch reads ASRERGHKSREERCGE. A BTB domain is found at 63-126; the sequence is CDVIIVVQNA…IYTGRLGECE (64 aa). The segment at 241 to 245 is binding to CtBP; sequence GLDLS. 2 disordered regions span residues 264–326 and 342–405; these read PAEP…LPRG and GPYL…DRYC. Composition is skewed to basic and acidic residues over residues 266–278 and 351–361; these read EPRE…RHDS and EKELEREEKAE. The span at 384–398 shows a compositional bias: low complexity; that stretch reads STSEETGSSEGPSPG. C2H2-type zinc fingers lie at residues 420–447, 474–501, 502–529, 530–557, and 558–585; these read YVCI…EEEL, YRCS…LTRP, YPCT…GLKP, FACD…GEKP, and YECQ…AGPD.

Belongs to the krueppel C2H2-type zinc-finger protein family. Hic subfamily. As to quaternary structure, interacts with CtBP. Isoform 1 is highly expressed in kidney and lung. Expression of isoform 2 is higher in the lens, retina and stomach, and extremely low in heart, muscle, kidney and lung. Isoform 3 is weakly expressed in heart, kidney and lens.

Its subcellular location is the nucleus. In terms of biological role, binds specifically to the gamma F-1-binding motif of the gamma F-crystallin promoter. May have a regulatory role in sclerotome specification and/or differentiation. Isoform 2 functions as a transcriptional repressor in lens cells. The chain is Hypermethylated in cancer 1 protein (HIC1) from Gallus gallus (Chicken).